A 147-amino-acid polypeptide reads, in one-letter code: Globin, polymeric component P3 (147 aa).

The Globin domain occupies 2–146 (HLTADQVAAL…ISDALIAGLE (145 aa)). Heme b is bound at residue histidine 96.

It belongs to the globin family. Polymer.

This Glycera dibranchiata (Bloodworm) protein is Globin, polymeric component P3.